Consider the following 298-residue polypeptide: Trimeric intracellular cation channel type A (298 aa).

Over 1-18 (MDLMSALSLGELALSFSR) the chain is Lumenal. A helical membrane pass occupies residues 19 to 39 (VPLFPVFDLSYFIVSIIYLKY). Topologically, residues 40-51 (EPGAVELSRRHP) are cytoplasmic. Residues 52-72 (VASWLCAMLHCFGSYILADLL) traverse the membrane as a helical segment. The Lumenal portion of the chain corresponds to 73 to 85 (LGEPIIDYFSNSS). G74 is a Ca(2+) binding site. A helical transmembrane segment spans residues 86-106 (SILLASGVWYLIFFCPLDLFY). Topologically, residues 107–144 (KCVCFLPVKLIFVAMKEVVRVRKIAVGIHHAHHHYHHG) are cytoplasmic. Residues K122 and R126 each contribute to the a 1,2-diacyl-sn-glycero-3-phospho-(1D-myo-inositol-4,5-bisphosphate) site. A helical transmembrane segment spans residues 145–165 (WFIMIATGWVKGSGVALLSNV). The Lumenal segment spans residues 166–178 (EQLLRGVWKPETN). Residues 179–199 (EILHMSFPTKASLYGAILFTL) form a helical membrane-spanning segment. Residues 200 to 209 (QQTRWLPVSK) lie on the Cytoplasmic side of the membrane. The helical transmembrane segment at 210–230 (ASLIFVFTMFMVSCKVFLTAT) threads the bilayer. Topologically, residues 231-234 (HSHS) are lumenal. A helical membrane pass occupies residues 235–255 (SPFDILEGYICPVLFGATWGG). Residues 256-298 (DHHHDNHGAPHGMGLGTQHSGLPAKAKEELGEGSRKKKTKKAD) are Cytoplasmic-facing. Residues 260–298 (DNHGAPHGMGLGTQHSGLPAKAKEELGEGSRKKKTKKAD) form a disordered region. A compositionally biased stretch (basic and acidic residues) spans 280-289 (KAKEELGEGS).

The protein belongs to the TMEM38 family. Homotrimer; conformation seems to be controled by binding to diacylglycerol (DAG). In terms of tissue distribution, expressed at high levels in heart and striated muscle. Also detected in brain, lung and kidney.

It is found in the sarcoplasmic reticulum membrane. The protein localises to the nucleus membrane. It catalyses the reaction K(+)(in) = K(+)(out). With respect to regulation, channel activity is activated by a change of voltage within the sarcoplasmic reticulum lumen and blocked by luminal high Ca(2+) levels. Intracellular monovalent cation channel required for maintenance of rapid intracellular calcium release. Acts as a potassium counter-ion channel that functions in synchronization with calcium release from intracellular stores. Opened by a change of voltage within the sarcoplasmic reticulum lumen. The chain is Trimeric intracellular cation channel type A (Tmem38a) from Mus musculus (Mouse).